Here is a 279-residue protein sequence, read N- to C-terminus: Reaction center protein L chain (279 aa).

Helical transmembrane passes span 33–56 (GFFGVTTLFFSVLGTALIIWGASQ), 85–113 (GLWQIITVCAIGAFVSWALREVEICRKLG), and 116–141 (YHVPIAFSFAILAYVTLVVIRPILMG). (7R,8Z)-bacteriochlorophyll b-binding residues include His-154 and His-174. Residues 171–200 (NPAHMLAITFFFTTTLAMSMHGGLILSAAN) traverse the membrane as a helical segment. His-191 is a Fe cation binding site. A ubiquinone is bound at residue Phe-217. The helical transmembrane segment at 226–252 (GSLGIHRLGLFLALSAAFWSAVCIVIS) threads the bilayer. Residue His-231 coordinates Fe cation.

This sequence belongs to the reaction center PufL/M/PsbA/D family. As to quaternary structure, reaction center is composed of four bacteriochlorophylls, two bacteriopheophytins, two ubiquinones, one iron, and three highly hydrophobic polypeptide chains (designated L, M, and H).

The protein localises to the cell inner membrane. Its function is as follows. The reaction center is a membrane-bound complex that mediates the initial photochemical event in the electron transfer process of photosynthesis. The chain is Reaction center protein L chain (pufL) from Rubrivivax gelatinosus (strain NBRC 100245 / IL144).